Here is a 426-residue protein sequence, read N- to C-terminus: Na(+)/H(+) antiporter 1 (426 aa).

The next 12 helical transmembrane spans lie at 1-21 (MELM…SLVA), 29-49 (IPDI…LQII), 57-77 (IFEY…AFTM), 95-115 (ITFL…LNLP), 120-140 (VGYL…IPVF), 158-178 (IFND…FGLF), 184-204 (LIDL…LAKI), 208-228 (IIIH…GAML), 236-256 (LLPS…IMGL), 286-306 (VFIF…NYFI), 309-329 (LLVA…LGLI), and 382-402 (IAGT…ILEA).

The protein belongs to the monovalent cation:proton antiporter 1 (CPA1) transporter (TC 2.A.36) family.

The protein resides in the cell membrane. This is a Na(+)/H(+) antiporter. Can also transport lithium. The chain is Na(+)/H(+) antiporter 1 from Methanocaldococcus jannaschii (strain ATCC 43067 / DSM 2661 / JAL-1 / JCM 10045 / NBRC 100440) (Methanococcus jannaschii).